Reading from the N-terminus, the 210-residue chain is Synaptosomal-associated protein 23 (210 aa).

At methionine 1 the chain carries N-acetylmethionine. Serine 5, serine 20, serine 23, and serine 34 each carry phosphoserine. The t-SNARE coiled-coil homology 1 domain occupies 14–76 (HQVTDESLES…REAEKTLTEL (63 aa)). Positions 23-76 (STRRILGLAIESQDAGIKTITMLDEQGEQLNRIEEGMDQINKDMREAEKTLTEL) form a coiled coil. S-palmitoyl cysteine attachment occurs at residues cysteine 79, cysteine 80, cysteine 83, cysteine 85, and cysteine 87. The disordered stretch occupies residues 104–135 (GDGGDNSPSNVVSKQPSRITNGQPQQTTGAAS). Residues 109–133 (NSPSNVVSKQPSRITNGQPQQTTGA) are compositionally biased toward polar residues. Residues serine 110 and serine 160 each carry the phosphoserine modification. The t-SNARE coiled-coil homology 2 domain maps to 145-207 (DAREDEMEEN…DIANTRAKKL (63 aa)).

This sequence belongs to the SNAP-25 family. In terms of assembly, homotetramer (via coiled-coil domain), also forms heterotetramers with STX4 and VAMP3. Found in a complex with VAMP8 and STX1A. Found in a complex with VAMP8 and STX4 in pancreas. Interacts simultaneously with SNAPIN and SYN4. Interacts with STX1A. Interacts with STX12. Interacts tightly to multiple syntaxins and synaptobrevins/VAMPs. Interacts with ZDHHC13 (via ANK repeats). Interacts with ZDHHC17 (via ANK repeats). Post-translationally, (Microbial infection) Targeted and hydrolyzed by C.botulinum neurotoxin type A (BoNT/A, botA) which hydrolyzes the 202-Thr-|-Arg-203 bond; the in vitro reaction is not highly efficient. In terms of processing, (Microbial infection) Targeted and hydrolyzed by C.botulinum neurotoxin type E (BoNT/E) which hydrolyzes the 185-Arg-|-Ile-186 bond; the in vitro reaction is more efficient than that of BoNT/A. As to expression, expressed in non-neuronal tissues.

It localises to the cell membrane. The protein localises to the synapse. It is found in the synaptosome. In terms of biological role, essential component of the high affinity receptor for the general membrane fusion machinery and an important regulator of transport vesicle docking and fusion. This is Synaptosomal-associated protein 23 (Snap23) from Mus musculus (Mouse).